The chain runs to 189 residues: Pyridoxal 5'-phosphate synthase subunit PdxT (189 aa).

G48–S50 is an L-glutamine binding site. The Nucleophile role is filled by C80. L-glutamine-binding positions include R107 and I136–R137. Active-site charge relay system residues include H172 and E174.

This sequence belongs to the glutaminase PdxT/SNO family. As to quaternary structure, in the presence of PdxS, forms a dodecamer of heterodimers. Only shows activity in the heterodimer.

It catalyses the reaction aldehydo-D-ribose 5-phosphate + D-glyceraldehyde 3-phosphate + L-glutamine = pyridoxal 5'-phosphate + L-glutamate + phosphate + 3 H2O + H(+). The enzyme catalyses L-glutamine + H2O = L-glutamate + NH4(+). Its pathway is cofactor biosynthesis; pyridoxal 5'-phosphate biosynthesis. Catalyzes the hydrolysis of glutamine to glutamate and ammonia as part of the biosynthesis of pyridoxal 5'-phosphate. The resulting ammonia molecule is channeled to the active site of PdxS. The polypeptide is Pyridoxal 5'-phosphate synthase subunit PdxT (Ruminiclostridium cellulolyticum (strain ATCC 35319 / DSM 5812 / JCM 6584 / H10) (Clostridium cellulolyticum)).